The chain runs to 327 residues: Phenylalanine--tRNA ligase alpha subunit (327 aa).

Glutamate 252 serves as a coordination point for Mg(2+).

The protein belongs to the class-II aminoacyl-tRNA synthetase family. Phe-tRNA synthetase alpha subunit type 1 subfamily. Tetramer of two alpha and two beta subunits. The cofactor is Mg(2+).

The protein localises to the cytoplasm. It catalyses the reaction tRNA(Phe) + L-phenylalanine + ATP = L-phenylalanyl-tRNA(Phe) + AMP + diphosphate + H(+). The protein is Phenylalanine--tRNA ligase alpha subunit of Salmonella agona (strain SL483).